The following is a 417-amino-acid chain: Fructose-1,6-bisphosphatase 1, chloroplastic (417 aa).

The transit peptide at 1-59 directs the protein to the chloroplast; that stretch reads MAATAATTTSSHLLLSSSRHVASSSQPSILSPRSLFSNNGKRAPTGVRNHQYASGVRCM. Over residues 24–35 the composition is skewed to low complexity; the sequence is SSQPSILSPRSL. Positions 24–48 are disordered; the sequence is SSQPSILSPRSLFSNNGKRAPTGVR. Position 60 is an N-acetylalanine (Ala60). 5 residues coordinate Mg(2+): Glu138, Glu167, Asp188, Leu190, and Asp191. 191 to 194 contacts substrate; sequence DGSS. Residues Cys233 and Cys238 are joined by a disulfide bond. Substrate is bound by residues Asn297, Tyr329, Tyr347, Tyr349, and Lys359. Position 365 (Glu365) interacts with Mg(2+).

Belongs to the FBPase class 1 family. Homotetramer. The cofactor is Mg(2+).

It localises to the plastid. The protein localises to the chloroplast stroma. The catalysed reaction is beta-D-fructose 1,6-bisphosphate + H2O = beta-D-fructose 6-phosphate + phosphate. The protein operates within carbohydrate biosynthesis; Calvin cycle. Catalyzes the irreversible reaction from fructose-1,6-bisphosphate to fructose-6-phosphate and inorganic phosphate, to regenerate the primary CO(2) acceptor molecule, ribulose-1,5-bisphosphate. Involved in the regulation of photosynthetic electron flow and sucrose synthesis. Its activity is critical for normal plant development and important for the regulation of a wide range of metabolic processes. In Arabidopsis thaliana (Mouse-ear cress), this protein is Fructose-1,6-bisphosphatase 1, chloroplastic.